Here is a 397-residue protein sequence, read N- to C-terminus: Cathepsin E (397 aa).

Residues Met-1 to Gly-16 form the signal peptide. A propeptide spans Ile-17–Phe-49 (activation peptide). The Peptidase A1 domain maps to Tyr-74–Ala-385. The active site involves Asp-92. Cysteines 105 and 110 form a disulfide. An N-linked (GlcNAc...) asparagine glycan is attached at Asn-139. A disulfide bond links Cys-268 and Cys-272. Asp-277 is an active-site residue. Cysteines 310 and 344 form a disulfide.

It belongs to the peptidase A1 family. Homodimer; disulfide-linked. Post-translationally, glycosylated. Contains high mannose-type oligosaccharide. As to expression, found in the larval foregut and adult stomach.

It localises to the endosome. The catalysed reaction is Similar to cathepsin D, but slightly broader specificity.. In terms of biological role, may have a role in immune function. Probably involved in the processing of antigenic peptides during MHC class II-mediated antigen presentation. The sequence is that of Cathepsin E (CTSE) from Aquarana catesbeiana (American bullfrog).